A 577-amino-acid polypeptide reads, in one-letter code: Gamma-tubulin complex component gfh1 (577 aa).

It belongs to the TUBGCP family.

The protein resides in the cytoplasm. It localises to the cytoskeleton. Its subcellular location is the microtubule organizing center. The protein localises to the spindle pole body. Functionally, required for proper anchoring of astral microtubules at the spindle pole bodies (SPBs), during anaphase, ensuring correct cell polarity. In Schizosaccharomyces pombe (strain 972 / ATCC 24843) (Fission yeast), this protein is Gamma-tubulin complex component gfh1 (gfh1).